A 118-amino-acid polypeptide reads, in one-letter code: Ribosome-binding factor A (118 aa).

This sequence belongs to the RbfA family. Monomer. Binds 30S ribosomal subunits, but not 50S ribosomal subunits or 70S ribosomes.

Its subcellular location is the cytoplasm. Its function is as follows. One of several proteins that assist in the late maturation steps of the functional core of the 30S ribosomal subunit. Associates with free 30S ribosomal subunits (but not with 30S subunits that are part of 70S ribosomes or polysomes). Required for efficient processing of 16S rRNA. May interact with the 5'-terminal helix region of 16S rRNA. This is Ribosome-binding factor A from Clostridium beijerinckii (strain ATCC 51743 / NCIMB 8052) (Clostridium acetobutylicum).